Consider the following 277-residue polypeptide: Large ribosomal subunit protein uL2 (277 aa).

Disordered regions lie at residues 32 to 58 (KSLTKGKKFKSGRDSSGRISIRRRGGG) and 225 to 277 (VAMN…RRNK). Positions 258–277 (YKTRKKKRYSDKFIIKRRNK) are enriched in basic residues.

The protein belongs to the universal ribosomal protein uL2 family. In terms of assembly, part of the 50S ribosomal subunit. Forms a bridge to the 30S subunit in the 70S ribosome.

In terms of biological role, one of the primary rRNA binding proteins. Required for association of the 30S and 50S subunits to form the 70S ribosome, for tRNA binding and peptide bond formation. It has been suggested to have peptidyltransferase activity; this is somewhat controversial. Makes several contacts with the 16S rRNA in the 70S ribosome. The protein is Large ribosomal subunit protein uL2 of Borreliella burgdorferi (strain ATCC 35210 / DSM 4680 / CIP 102532 / B31) (Borrelia burgdorferi).